Consider the following 826-residue polypeptide: DEAD-box ATP-dependent RNA helicase 13 (826 aa).

Residues 1-10 show a composition bias toward basic and acidic residues; the sequence is MVTGDKESSL. Disordered regions lie at residues 1–62 and 76–175; these read MVTG…QLDG and HLTL…GDDT. Positions 11-22 are enriched in basic residues; the sequence is MKKRNKRSHKRK. Over residues 49-58 the composition is skewed to polar residues; the sequence is SFSTLFSGSG. The segment covering 94 to 128 has biased composition (acidic residues); sequence EDDDDTNETVDEMIEGEEAEEDGEGRDDEDDEDDE. A coiled-coil region spans residues 125–166; it reads EDDEETRKKKEKKAKRNKEKKKEKKKKKQKKINEAAKNQDAS. A compositionally biased stretch (basic residues) spans 133-154; that stretch reads KKEKKAKRNKEKKKEKKKKKQK. The Q motif motif lies at 190-218; that stretch reads SAWSSMRLHPLLMKSIYRLDFKEPTKIQK. The 218-residue stretch at 222-439 folds into the Helicase ATP-binding domain; it reads NVAAYQGKDV…KLKRGSSKSK (218 aa). 235–242 provides a ligand contact to ATP; that stretch reads AETGSGKT. Residues 363 to 366 carry the DEAD box motif; it reads DEAD. Positions 476-644 constitute a Helicase C-terminal domain; that stretch reads KIEESFIKCE…YMPAVRKRLY (169 aa). Coiled coils occupy residues 666–712 and 783–810; these read LKKH…TLLS and KMKGQSAEKRRDIASLKKKRKEEKIGRR. Residues 783–826 are disordered; the sequence is KMKGQSAEKRRDIASLKKKRKEEKIGRRDQRRNQKKQRKLMASS. Composition is skewed to basic and acidic residues over residues 788–797 and 804–814; these read SAEKRRDIAS and EEKIGRRDQRR. A compositionally biased stretch (basic residues) spans 815 to 826; that stretch reads NQKKQRKLMASS.

This sequence belongs to the DEAD box helicase family. DDX24/MAK5 subfamily.

It carries out the reaction ATP + H2O = ADP + phosphate + H(+). The polypeptide is DEAD-box ATP-dependent RNA helicase 13 (RH13) (Arabidopsis thaliana (Mouse-ear cress)).